Reading from the N-terminus, the 522-residue chain is Glucose-1-phosphate adenylyltransferase large subunit 1, chloroplastic (522 aa).

The N-terminal 54 residues, 1 to 54 (MVVSADCRISLSAPSCIRSSSTGLTRHIKLGSFCNGELMGKKLNLSQLPNIRLR), are a transit peptide targeting the chloroplast. The residue at position 428 (Ser-428) is a Phosphoserine.

This sequence belongs to the bacterial/plant glucose-1-phosphate adenylyltransferase family. Heterotetramer. As to expression, leaves.

It localises to the plastid. The protein localises to the chloroplast. The enzyme catalyses alpha-D-glucose 1-phosphate + ATP + H(+) = ADP-alpha-D-glucose + diphosphate. The protein operates within glycan biosynthesis; starch biosynthesis. With respect to regulation, activated by 3'phosphoglycerate, inhibited by orthophosphate. Allosteric regulation. In terms of biological role, this protein plays a role in synthesis of starch. It catalyzes the synthesis of the activated glycosyl donor, ADP-glucose from Glc-1-P and ATP. This Arabidopsis thaliana (Mouse-ear cress) protein is Glucose-1-phosphate adenylyltransferase large subunit 1, chloroplastic (ADG2).